The primary structure comprises 898 residues: Fasciclin-2 (898 aa).

The N-terminal stretch at 1 to 22 is a signal peptide; it reads MRTVACAVLLACFMGCLAGAWA. The Extracellular portion of the chain corresponds to 23–764; sequence QSAGLEILPN…EDGSEGQMSS (742 aa). Ig-like C2-type domains lie at 31–124, 134–219, 226–316, 321–423, and 428–525; these read PNSE…KQLS, PITW…RPIR, PQMS…VEVT, PRIG…GHLM, and PSFA…IMLR. N-linked (GlcNAc...) asparagine glycosylation is found at Asn-35, Asn-51, Asn-149, Asn-192, Asn-297, and Asn-328. Cys-48 and Cys-113 are joined by a disulfide. 2 cysteine pairs are disulfide-bonded: Cys-156-Cys-203 and Cys-248-Cys-300. A disulfide bond links Cys-343 and Cys-407. N-linked (GlcNAc...) asparagine glycosylation is found at Asn-447, Asn-457, and Asn-580. Cys-450 and Cys-509 are oxidised to a cystine. 2 consecutive Fibronectin type-III domains span residues 532 to 626 and 644 to 745; these read AVLQ…TPRI and GTEN…VKDP. The helical transmembrane segment at 765–782 threads the bilayer; the sequence is AAIVVLVVAALLLALLVV. At 783–898 the chain is on the cytoplasmic side; that stretch reads DLVCCLVWRG…TSFVGKDSAV (116 aa).

Its subcellular location is the membrane. Neuronal recognition molecule. Involved in a pathway recognition for axons during the development of nerve fascicles. In Schistocerca americana (American grasshopper), this protein is Fasciclin-2 (FAS2).